We begin with the raw amino-acid sequence, 186 residues long: MCVYIVAGLGNPGPSYDKTRHNVGQMVLDILSGGARFRRHKTNNFYLSLGDILLVKPDAYMNLSGPVIASLMKFHSVSDLLVLHDDIDLPLGTLRFKQGGGTAGHRGLRSISDCLGSDYARLRVGIGRPENNQSIEDFVLSNFSPVQTDIISRTIQLAAEAVLHLRDNGFVGVKQFIAQTKLPSRT.

A tRNA-binding site is contributed by Y16. The active-site Proton acceptor is the H21. Residues Y60 and N62 each coordinate tRNA.

Belongs to the PTH family. In terms of assembly, monomer.

It localises to the cytoplasm. It catalyses the reaction an N-acyl-L-alpha-aminoacyl-tRNA + H2O = an N-acyl-L-amino acid + a tRNA + H(+). In terms of biological role, hydrolyzes ribosome-free peptidyl-tRNAs (with 1 or more amino acids incorporated), which drop off the ribosome during protein synthesis, or as a result of ribosome stalling. Functionally, catalyzes the release of premature peptidyl moieties from peptidyl-tRNA molecules trapped in stalled 50S ribosomal subunits, and thus maintains levels of free tRNAs and 50S ribosomes. This chain is Peptidyl-tRNA hydrolase, found in Tropheryma whipplei (strain Twist) (Whipple's bacillus).